The primary structure comprises 216 residues: Ribosomal RNA small subunit methyltransferase G (216 aa).

S-adenosyl-L-methionine-binding positions include glycine 83, methionine 88, 134–135, and arginine 149; that span reads VE.

It belongs to the methyltransferase superfamily. RNA methyltransferase RsmG family.

The protein localises to the cytoplasm. The enzyme catalyses guanosine(527) in 16S rRNA + S-adenosyl-L-methionine = N(7)-methylguanosine(527) in 16S rRNA + S-adenosyl-L-homocysteine. Specifically methylates the N7 position of guanine in position 527 of 16S rRNA. The sequence is that of Ribosomal RNA small subunit methyltransferase G from Pseudomonas entomophila (strain L48).